We begin with the raw amino-acid sequence, 522 residues long: Zinc finger protein 892 (522 aa).

Disordered regions lie at residues 1 to 22 (MEPE…GNPK) and 96 to 124 (AASQ…ESAP). The segment covering 100 to 116 (KHWETIPESKELTPEKD) has biased composition (basic and acidic residues). C2H2-type zinc fingers lie at residues 221–243 (WKCN…QRIH), 249–271 (YECN…QRIH), 277–299 (YECH…HIIH), 305–327 (YECN…QRIH), 333–355 (YECN…QVIH), 361–383 (YKCN…QRTH), 389–411 (YECN…QRTH), 417–439 (YKCN…QRTH), 445–467 (YKCK…QKTH), and 473–495 (YKCK…QKTH).

Belongs to the krueppel C2H2-type zinc-finger protein family.

The protein localises to the nucleus. Functionally, may be involved in transcriptional regulation. The polypeptide is Zinc finger protein 892 (Homo sapiens (Human)).